An 86-amino-acid polypeptide reads, in one-letter code: OMEGA-stichotoxin-Shd4a (86 aa).

The first 23 residues, 1 to 23, serve as a signal peptide directing secretion; that stretch reads MASFRTLFACVVILCCVLWSSMA. Residues 24 to 36 constitute a propeptide that is removed on maturation; sequence RYGEDMEVETEMN. Residues 40 to 82 form the EGF-like domain; the sequence is EGVRCTGQHASSFCLNGGTCRHIASLGEYYCICPGDYTGHRCD. Disulfide bonds link C44/C59, C53/C70, and C72/C81.

It belongs to the EGF domain peptide family.

The protein localises to the secreted. It is found in the nematocyst. Functionally, has both toxic and EGF activity. Its EGF activity consists of rounding cells (morphological change) and inducing tyrosine phosphorylation of the EGFR in A431 cells, but with a lower potency that human EGF. This is OMEGA-stichotoxin-Shd4a from Stichodactyla haddoni (Saddle carpet anemone).